Here is a 200-residue protein sequence, read N- to C-terminus: A-type ATP synthase subunit E 3 (200 aa).

It belongs to the V-ATPase E subunit family. As to quaternary structure, has multiple subunits with at least A(3), B(3), C, D, E, F, H, I and proteolipid K(x).

The protein resides in the cell membrane. Functionally, component of the A-type ATP synthase that produces ATP from ADP in the presence of a proton gradient across the membrane. In Methanospirillum hungatei JF-1 (strain ATCC 27890 / DSM 864 / NBRC 100397 / JF-1), this protein is A-type ATP synthase subunit E 3.